The chain runs to 232 residues: Ubiquinone biosynthesis O-methyltransferase (232 aa).

Residues arginine 36, glycine 55, aspartate 76, and methionine 120 each coordinate S-adenosyl-L-methionine.

It belongs to the methyltransferase superfamily. UbiG/COQ3 family.

It catalyses the reaction a 3-demethylubiquinol + S-adenosyl-L-methionine = a ubiquinol + S-adenosyl-L-homocysteine + H(+). It carries out the reaction a 3-(all-trans-polyprenyl)benzene-1,2-diol + S-adenosyl-L-methionine = a 2-methoxy-6-(all-trans-polyprenyl)phenol + S-adenosyl-L-homocysteine + H(+). Its pathway is cofactor biosynthesis; ubiquinone biosynthesis. Functionally, O-methyltransferase that catalyzes the 2 O-methylation steps in the ubiquinone biosynthetic pathway. The polypeptide is Ubiquinone biosynthesis O-methyltransferase (Chromobacterium violaceum (strain ATCC 12472 / DSM 30191 / JCM 1249 / CCUG 213 / NBRC 12614 / NCIMB 9131 / NCTC 9757 / MK)).